A 510-amino-acid chain; its full sequence is Beta-glucosidase 12 (510 aa).

The first 24 residues, 1 to 24 (MAAAGAMPGGLLLTFLLLAVVASG), serve as a signal peptide directing secretion. Residue Q53 coordinates a beta-D-glucoside. N-linked (GlcNAc...) asparagine glycosylation occurs at N122. Residues H157 and 202–203 (NE) each bind a beta-D-glucoside. The active-site Proton donor is the E203. 2 disulfides stabilise this stretch: C208–C243 and C222–C230. Residue N229 is glycosylated (N-linked (GlcNAc...) asparagine). Position 346 (Y346) interacts with a beta-D-glucoside. N-linked (GlcNAc...) asparagine glycans are attached at residues N361 and N371. E417 contributes to the a beta-D-glucoside binding site. E417 functions as the Nucleophile in the catalytic mechanism. N425 carries N-linked (GlcNAc...) asparagine glycosylation. Residues W466, 473–474 (EW), and F482 contribute to the a beta-D-glucoside site.

The protein belongs to the glycosyl hydrolase 1 family.

The protein localises to the secreted. The enzyme catalyses Hydrolysis of terminal, non-reducing beta-D-glucosyl residues with release of beta-D-glucose.. Hydrolyzes p-nitrophenyl beta-D-glucoside, p-nitrophenyl beta-D-galactoside, p-nitrophenyl beta-D-xyloside, p-nitrophenyl beta-D-fucoside, p-nitrophenyl beta-L-arabinoside, cello-oligosaccharides and laminaribiose. The sequence is that of Beta-glucosidase 12 from Oryza sativa subsp. japonica (Rice).